A 207-amino-acid polypeptide reads, in one-letter code: MVRGKIEIKKIENVTSRQVTFSKRRSGLFKKAHELSVLCDAQVAAIVFSQSGRLHEYSSSQMEKIIDRYGKFSNAFYVAERPQVERYLQELKMEIDRMVKKIDLLEVHHRKLLGQGLDSCSVTELQEIDTQIEKSLRIVRSRKAELYADQLKKLKEKERELLNERKRLLEEVNMHHSSKGNTEGGHRTKHSSEVETDLFIGLPVTRL.

The MADS-box domain occupies 1–61 (MVRGKIEIKK…GRLHEYSSSQ (61 aa)). In terms of domain architecture, K-box spans 88 to 178 (LQELKMEIDR…LEEVNMHHSS (91 aa)).

The protein localises to the nucleus. Functionally, MADS-box transcription factor that acts with AGL42 and AGL72 in the control of flowering time. Promotes flowering at the shoot apical and axillary meristems. Seems to act through a gibberellin-dependent pathway. Interacts genetically with SOC1 and its expression is directly regulated by SOC1. The polypeptide is MADS-box protein AGL71 (AGL71) (Arabidopsis thaliana (Mouse-ear cress)).